Consider the following 311-residue polypeptide: DNA replication terminus site-binding protein (311 aa).

Belongs to the Tus family.

The protein resides in the cytoplasm. Functionally, trans-acting protein required for termination of DNA replication. Binds to DNA replication terminator sequences (terA to terF) to prevent the passage of replication forks. The termination efficiency will be affected by the affinity of this protein for the terminator sequence. The sequence is that of DNA replication terminus site-binding protein from Yersinia pseudotuberculosis serotype I (strain IP32953).